Reading from the N-terminus, the 217-residue chain is Pyridoxine/pyridoxamine 5'-phosphate oxidase (217 aa).

Substrate is bound by residues 14 to 17 and Lys-72; that span reads RKSY. FMN contacts are provided by residues 67 to 72, 82 to 83, Arg-88, and Lys-89; these read RVVLIK and YT. The substrate site is built by Tyr-129, Arg-133, and Ser-137. FMN contacts are provided by residues 146–147 and Trp-190; that span reads QS. Residue 196–198 participates in substrate binding; the sequence is RLH. Residue Arg-200 participates in FMN binding.

It belongs to the pyridoxamine 5'-phosphate oxidase family. Homodimer. FMN serves as cofactor.

It carries out the reaction pyridoxamine 5'-phosphate + O2 + H2O = pyridoxal 5'-phosphate + H2O2 + NH4(+). The catalysed reaction is pyridoxine 5'-phosphate + O2 = pyridoxal 5'-phosphate + H2O2. It participates in cofactor metabolism; pyridoxal 5'-phosphate salvage; pyridoxal 5'-phosphate from pyridoxamine 5'-phosphate: step 1/1. The protein operates within cofactor metabolism; pyridoxal 5'-phosphate salvage; pyridoxal 5'-phosphate from pyridoxine 5'-phosphate: step 1/1. Functionally, catalyzes the oxidation of either pyridoxine 5'-phosphate (PNP) or pyridoxamine 5'-phosphate (PMP) into pyridoxal 5'-phosphate (PLP). This chain is Pyridoxine/pyridoxamine 5'-phosphate oxidase, found in Acidovorax sp. (strain JS42).